Consider the following 791-residue polypeptide: RAS guanyl-releasing protein 1 (791 aa).

The N-terminal Ras-GEF domain maps to 49 to 172; the sequence is LGKLSKGASL…RLIDTAQINS (124 aa). Residues 53-106 form a ras exchanger motif region; required for transforming activity region; sequence SKGASLDDLIQMCIQAFDLDGNMGQNSELLQIMLTMHGFLLPSTELLMKLRTLY. The 232-residue stretch at 201 to 432 folds into the Ras-GEF domain; that stretch reads EPQELAEHLT…YELSYAREPR (232 aa). EF-hand domains follow at residues 466–501 and 502–528; these read HVQR…FPFS and FCVM…ASSI. Ca(2+) contacts are provided by Asp479, Asp481, Asp483, Tyr485, Glu490, Asp506, Asp508, Glu510, and Glu517. The segment at 537–587 adopts a Phorbol-ester/DAG-type zinc-finger fold; that stretch reads LHNFQETTYLRPTFCDNCAGFLWGVIKQGYRCKDCGMNCHKQCKELVVFEC. Positions 683 to 695 are enriched in polar residues; it reads QVPSPQRSRTPGL. Residues 683 to 715 form a disordered region; sequence QVPSPQRSRTPGLTSHLPISPMPSPCPSPVPTR. Over residues 702-712 the composition is skewed to pro residues; that stretch reads SPMPSPCPSPV. The stretch at 728–785 forms a coiled coil; it reads IRKARAELRGGKAGIQELEKEKALLKEENTTLKIQLKDAQRRVETLRAELRKYVLDSD.

This sequence belongs to the RASGRP family.

The protein resides in the cytoplasm. The protein localises to the cytosol. It localises to the cell membrane. Its subcellular location is the golgi apparatus membrane. It is found in the endoplasmic reticulum membrane. Its activity is regulated as follows. Regulated by F-actin polymerization and probably by calcium. In terms of biological role, functions as a diacylglycerol (DAG)-regulated nucleotide exchange factor specifically activating Ras through the exchange of bound GDP for GTP. The sequence is that of RAS guanyl-releasing protein 1 (rasgrp1) from Xenopus tropicalis (Western clawed frog).